The following is a 251-amino-acid chain: Small ribosomal subunit protein uS3 (251 aa).

Residues 39-111 enclose the KH type-2 domain; sequence IRELINNFSK…DVDLNILEVK (73 aa).

Belongs to the universal ribosomal protein uS3 family. As to quaternary structure, part of the 30S ribosomal subunit. Forms a tight complex with proteins S10 and S14.

Functionally, binds the lower part of the 30S subunit head. Binds mRNA in the 70S ribosome, positioning it for translation. The sequence is that of Small ribosomal subunit protein uS3 from Phytoplasma sp. (strain STRAWB1).